Here is an 868-residue protein sequence, read N- to C-terminus: Leucine--tRNA ligase (868 aa).

The short motif at P42–H52 is the 'HIGH' region element. Residues K627–S631 carry the 'KMSKS' region motif. Position 630 (K630) interacts with ATP.

This sequence belongs to the class-I aminoacyl-tRNA synthetase family.

It localises to the cytoplasm. It catalyses the reaction tRNA(Leu) + L-leucine + ATP = L-leucyl-tRNA(Leu) + AMP + diphosphate. This Pseudomonas savastanoi pv. phaseolicola (strain 1448A / Race 6) (Pseudomonas syringae pv. phaseolicola (strain 1448A / Race 6)) protein is Leucine--tRNA ligase.